A 70-amino-acid polypeptide reads, in one-letter code: Small ribosomal subunit protein bS21A (70 aa).

The protein belongs to the bacterial ribosomal protein bS21 family.

This is Small ribosomal subunit protein bS21A from Paraburkholderia xenovorans (strain LB400).